A 524-amino-acid chain; its full sequence is Probable aminopeptidase NPEPL1 (524 aa).

Residues Lys260 and Asp265 each contribute to the Zn(2+) site. The active site involves Lys272. Zn(2+) is bound by residues Asp283, Asp342, and Glu344. The active site involves Arg346.

Belongs to the peptidase M17 family. The cofactor is Zn(2+). It depends on Mn(2+) as a cofactor.

Functionally, probably catalyzes the removal of unsubstituted N-terminal amino acids from various peptides. The polypeptide is Probable aminopeptidase NPEPL1 (Npepl1) (Mus musculus (Mouse)).